We begin with the raw amino-acid sequence, 445 residues long: Hydroxycinnamoyl-CoA:5-hydroxyanthranilate N-hydroxycinnamoyltransferase HHT4 (445 aa).

This sequence belongs to the plant acyltransferase family.

It carries out the reaction 5-hydroxyanthranilate + (E)-4-coumaroyl-CoA = avenanthramide A + CoA. It catalyses the reaction 5-hydroxyanthranilate + (E)-caffeoyl-CoA = avenanthramide C + CoA. In terms of biological role, involved in the biosynthesis of avenanthramide phytoalexins, which are phenolic alkaloids found mainly in oats. Catalyzes the N-acylation of 5-hydroxyanthranilate with 4-coumaroyl-CoA or caffeoyl-CoA as acyl donors, forming avenanthramide A and avenanthramide C, respectively. Does not accept feruloyl-CoA as a substrate. This Avena sativa (Oat) protein is Hydroxycinnamoyl-CoA:5-hydroxyanthranilate N-hydroxycinnamoyltransferase HHT4.